A 249-amino-acid polypeptide reads, in one-letter code: Phosphate import ATP-binding protein PstB 2 (249 aa).

The ABC transporter domain maps to 4–244 (FEVTHLNLFY…PKDHRTQGYV (241 aa)). 36 to 43 (GPSGCGKS) is a binding site for ATP.

This sequence belongs to the ABC transporter superfamily. Phosphate importer (TC 3.A.1.7) family. In terms of assembly, the complex is composed of two ATP-binding proteins (PstB), two transmembrane proteins (PstC and PstA) and a solute-binding protein (PstS).

It localises to the cell inner membrane. The enzyme catalyses phosphate(out) + ATP + H2O = ADP + 2 phosphate(in) + H(+). In terms of biological role, part of the ABC transporter complex PstSACB involved in phosphate import. Responsible for energy coupling to the transport system. This chain is Phosphate import ATP-binding protein PstB 2, found in Shewanella oneidensis (strain ATCC 700550 / JCM 31522 / CIP 106686 / LMG 19005 / NCIMB 14063 / MR-1).